A 405-amino-acid polypeptide reads, in one-letter code: NADH-quinone oxidoreductase subunit D (405 aa).

This sequence belongs to the complex I 49 kDa subunit family. As to quaternary structure, NDH-1 is composed of 14 different subunits. Subunits NuoB, C, D, E, F, and G constitute the peripheral sector of the complex.

The protein localises to the cell inner membrane. The catalysed reaction is a quinone + NADH + 5 H(+)(in) = a quinol + NAD(+) + 4 H(+)(out). Its function is as follows. NDH-1 shuttles electrons from NADH, via FMN and iron-sulfur (Fe-S) centers, to quinones in the respiratory chain. The immediate electron acceptor for the enzyme in this species is believed to be ubiquinone. Couples the redox reaction to proton translocation (for every two electrons transferred, four hydrogen ions are translocated across the cytoplasmic membrane), and thus conserves the redox energy in a proton gradient. The sequence is that of NADH-quinone oxidoreductase subunit D from Ruegeria pomeroyi (strain ATCC 700808 / DSM 15171 / DSS-3) (Silicibacter pomeroyi).